A 120-amino-acid chain; its full sequence is Large ribosomal subunit protein bL12 (120 aa).

It belongs to the bacterial ribosomal protein bL12 family. Homodimer. Part of the ribosomal stalk of the 50S ribosomal subunit. Forms a multimeric L10(L12)X complex, where L10 forms an elongated spine to which 2 to 4 L12 dimers bind in a sequential fashion. Binds GTP-bound translation factors.

In terms of biological role, forms part of the ribosomal stalk which helps the ribosome interact with GTP-bound translation factors. Is thus essential for accurate translation. In Lactobacillus gasseri (strain ATCC 33323 / DSM 20243 / BCRC 14619 / CIP 102991 / JCM 1131 / KCTC 3163 / NCIMB 11718 / NCTC 13722 / AM63), this protein is Large ribosomal subunit protein bL12.